Here is a 353-residue protein sequence, read N- to C-terminus: NADH-ubiquinone oxidoreductase chain 2 (353 aa).

8 helical membrane-spanning segments follow: residues 4–24 (SVVL…LSSH), 60–80 (FLVQ…QLWL), 96–116 (IVLT…FWFP), 139–159 (FIIL…TLGC), 198–218 (IYVG…VFLI), 241–261 (GNVL…TGFL), 274–294 (NLLV…FFYL), and 330–350 (VLLS…PALW).

The protein belongs to the complex I subunit 2 family.

It localises to the mitochondrion inner membrane. The enzyme catalyses a ubiquinone + NADH + 5 H(+)(in) = a ubiquinol + NAD(+) + 4 H(+)(out). Core subunit of the mitochondrial membrane respiratory chain NADH dehydrogenase (Complex I) that is believed to belong to the minimal assembly required for catalysis. Complex I functions in the transfer of electrons from NADH to the respiratory chain. The immediate electron acceptor for the enzyme is believed to be ubiquinone. The polypeptide is NADH-ubiquinone oxidoreductase chain 2 (ND2) (Pisaster ochraceus (Ochre sea star)).